The primary structure comprises 256 residues: Alcohol dehydrogenase (256 aa).

Residue 12 to 41 (FVAGLGGIGLDTTKELLKRDLKNLVILDRI) coordinates NAD(+). S140 is a binding site for substrate. Y153 acts as the Proton acceptor in catalysis.

This sequence belongs to the short-chain dehydrogenases/reductases (SDR) family. In terms of assembly, homodimer.

It carries out the reaction a primary alcohol + NAD(+) = an aldehyde + NADH + H(+). It catalyses the reaction a secondary alcohol + NAD(+) = a ketone + NADH + H(+). The chain is Alcohol dehydrogenase from Drosophila ananassae (Fruit fly).